Reading from the N-terminus, the 209-residue chain is ATP-dependent Clp protease proteolytic subunit (209 aa).

The active-site Nucleophile is the Ser-106. His-131 is an active-site residue.

The protein belongs to the peptidase S14 family. Fourteen ClpP subunits assemble into 2 heptameric rings which stack back to back to give a disk-like structure with a central cavity, resembling the structure of eukaryotic proteasomes.

It is found in the cytoplasm. The enzyme catalyses Hydrolysis of proteins to small peptides in the presence of ATP and magnesium. alpha-casein is the usual test substrate. In the absence of ATP, only oligopeptides shorter than five residues are hydrolyzed (such as succinyl-Leu-Tyr-|-NHMec, and Leu-Tyr-Leu-|-Tyr-Trp, in which cleavage of the -Tyr-|-Leu- and -Tyr-|-Trp bonds also occurs).. Cleaves peptides in various proteins in a process that requires ATP hydrolysis. Has a chymotrypsin-like activity. Plays a major role in the degradation of misfolded proteins. The sequence is that of ATP-dependent Clp protease proteolytic subunit from Caulobacter vibrioides (strain ATCC 19089 / CIP 103742 / CB 15) (Caulobacter crescentus).